Reading from the N-terminus, the 618-residue chain is MERYRIRRERKEILKNEIEKQRDLIQKEDFRLMSNENNEHNDEHDNRLIELNKQLNILKLELEELRLQGDRFYVLNGDDTILMDIDETSKITFYLCRHFTDLTKIPIEESNESRILIVNELETVSDPSIEPIFEFQKVISSKSIHQLFSVKTNFDNNNNNNNNSNNNNNGNKPSLFERVKQNTWSLGISPLRRTTSDPTIFGERFSPPKSISNFIERFKDNKEKDKEKDNSSLSITIQNNNTATTTTTTTTTTTTTTTTTTTTTTTTTTPTSSTTVNTNINQEKLRKYSTTPSINQINNQQNIENNNNNNNNNQEIGGKILLTWSNKETSMYILKTQEESLELLELLGSHIDRSKKVTAKQSQTIKILFQKKSTIYESTNPDHEEYLKHLWSLLYPEQEFQKKSPLWKKFGFQSDDPTRDFRGMGIMGLLNLIHLVQHHNDWVQEILAQDRDYPFAVAGINISNLIFEVFQISEDSLQQPWYSSFWSSSYMAMLCSMSRHNDHAFEELYFLIFNLLDHLWIQMNATYMMFPLVIKKLKSQLNEISNFNPNSFDEVRARFDLIQRLNIIDNPIDQQQQQLQQQQQSLPLPSSPRSFLNNYQQTTTSSTSISPSKNTQNN.

A coiled-coil region spans residues 1–72 (MERYRIRRER…EELRLQGDRF (72 aa)). 2 disordered regions span residues 153–175 (NFDN…KPSL) and 245–276 (TTTT…STTV). 2 stretches are compositionally biased toward low complexity: residues 156–171 (NNNN…NNGN) and 245–275 (TTTT…SSTT). Positions 382 to 545 (DHEEYLKHLW…KLKSQLNEIS (164 aa)) constitute an ELMO domain. Low complexity-rich tracts occupy residues 574–592 (QQQQ…PSSP) and 602–618 (TTTS…TQNN). Residues 574 to 618 (QQQQQLQQQQQSLPLPSSPRSFLNNYQQTTTSSTSISPSKNTQNN) are disordered.

This chain is ELMO domain-containing protein C (elmoC), found in Dictyostelium discoideum (Social amoeba).